A 301-amino-acid polypeptide reads, in one-letter code: Probable alpha-L-glutamate ligase 1 (301 aa).

The ATP-grasp domain maps to 104–287; sequence MQLMSRRGIG…VAGAIIDFVE (184 aa). Residues lysine 141, 178 to 179, aspartate 187, and 211 to 213 contribute to the ATP site; these read EY and RSN. Residues aspartate 248, glutamate 260, and asparagine 262 each contribute to the Mg(2+) site. Positions 248, 260, and 262 each coordinate Mn(2+).

The protein belongs to the RimK family. It depends on Mg(2+) as a cofactor. The cofactor is Mn(2+).

The chain is Probable alpha-L-glutamate ligase 1 from Shewanella baltica (strain OS185).